The primary structure comprises 470 residues: MSVQPVAVYALKVPAGGALIPAVPDAAAMFRVSMAAIDPDEEPDFDGHDTNQRPRATLRIVRAPPGLDLEDDSDDDYEDVDSDEESDDEEPNGGPSDKEKARKLKELAALKEMEEAMDEDDEDEDEDEDGEFDLKAAISKLVKGKGPATDSDEDDEEDEGLELDEMVVCTLDTEKNLQQPLDITVSEDERVFFKVTGTHTVYLTGNYVMPIDPHFHGEDEDEEDEDDYDLSPDEDELALDLMGDDDNESDELDGLENPRITEVDSDEEPPKLVDTKGKNKRSAPADEEKPAKQANGEESLSKKQQKKLKKNNGDAAAVEQKKEAKEGKEAKKVQFAKNLEQGPTPSGQDKKPAEQTTGTLGVKEVKGVKIDDKKLGKGPAAKAGNTVAMRYIGKLEDGKVFDANKKGKPFTFKLGKGEVIKGWDIGVAGMAVGGERRISIPPHLAYGKKALPGIPGNSKLIFDVKLLEIK.

Disordered regions lie at residues 40–101, 114–163, and 210–358; these read DEEP…KEKA, EEAM…GLEL, and PIDP…QTTG. Acidic residues-rich tracts occupy residues 68–91, 115–131, 150–163, and 218–254; these read DLEDDSDDDYEDVDSDEESDDEEP, EAMDEDDEDEDEDEDGE, DSDEDDEEDEGLEL, and EDEDEEDEDDYDLSPDEDELALDLMGDDDNESDELDG. Composition is skewed to basic and acidic residues over residues 268-291 and 319-332; these read EPPKLVDTKGKNKRSAPADEEKPA and EQKKEAKEGKEAKK. The PPIase FKBP-type domain maps to 384-470; it reads GNTVAMRYIG…IFDVKLLEIK (87 aa).

It belongs to the FKBP-type PPIase family. FKBP3/4 subfamily. Binds to histones H3 and H4.

Its subcellular location is the nucleus. It carries out the reaction [protein]-peptidylproline (omega=180) = [protein]-peptidylproline (omega=0). Inhibited by both FK506 and rapamycin. In terms of biological role, PPIase that acts as a histone chaperone. Histone proline isomerase that increases the rate of cis-trans isomerization at prolines on the histone H3 N-terminal tail. Proline isomerization influences H3 methylation thereby regulating gene expression. The protein is FK506-binding protein 4 (fpr4) of Aspergillus oryzae (strain ATCC 42149 / RIB 40) (Yellow koji mold).